The chain runs to 391 residues: Protein CapJ (391 aa).

Its pathway is capsule biogenesis; capsule polysaccharide biosynthesis. Its function is as follows. Required for the biosynthesis of type 1 capsular polysaccharide. The chain is Protein CapJ (capJ) from Staphylococcus aureus.